Here is a 368-residue protein sequence, read N- to C-terminus: DNA replication and repair protein RecF (368 aa).

Residue 30–37 participates in ATP binding; the sequence is GRNGSGKT.

The protein belongs to the RecF family.

It is found in the cytoplasm. Functionally, the RecF protein is involved in DNA metabolism; it is required for DNA replication and normal SOS inducibility. RecF binds preferentially to single-stranded, linear DNA. It also seems to bind ATP. The chain is DNA replication and repair protein RecF from Chlorobaculum parvum (strain DSM 263 / NCIMB 8327) (Chlorobium vibrioforme subsp. thiosulfatophilum).